The sequence spans 585 residues: Arginine--tRNA ligase (585 aa).

The short motif at 131 to 141 (ANPTGPMHVGH) is the 'HIGH' region element.

The protein belongs to the class-I aminoacyl-tRNA synthetase family. As to quaternary structure, monomer.

The protein resides in the cytoplasm. The enzyme catalyses tRNA(Arg) + L-arginine + ATP = L-arginyl-tRNA(Arg) + AMP + diphosphate. This is Arginine--tRNA ligase from Brucella anthropi (strain ATCC 49188 / DSM 6882 / CCUG 24695 / JCM 21032 / LMG 3331 / NBRC 15819 / NCTC 12168 / Alc 37) (Ochrobactrum anthropi).